A 747-amino-acid polypeptide reads, in one-letter code: Heterogeneous nuclear ribonucleoprotein U-like protein 2 (747 aa).

Positions 3 to 37 constitute an SAP domain; it reads VKRLKVTELRSELQRRGLDSRGLKVDLAQRLQEAL. Disordered regions lie at residues 40 to 242 and 627 to 666; these read EMLE…EEED and EEAR…GQRR. The span at 73–97 shows a compositional bias: acidic residues; the sequence is GDEEEDEEEEEEDEEALLEDEDEEP. A compositionally biased stretch (low complexity) spans 115–125; it reads EAAAMEAAAEP. Gly residues predominate over residues 137–147; it reads GSGGVNGGEEQ. A compositionally biased stretch (basic and acidic residues) spans 148–163; sequence GLGKREEDEPEERSGD. The residue at position 161 (Ser161) is a Phosphoserine. Position 165 is a phosphothreonine (Thr165). Phosphoserine occurs at positions 168, 185, 188, 226, and 228. The span at 185–223 shows a compositional bias: basic and acidic residues; the sequence is SEKSKPAGSDGERRGVKRQRDEKDEHGRAYYEFREEAYH. The B30.2/SPRY domain maps to 226 to 419; sequence SKSPLPPEEE…VELNFGQKEE (194 aa). A compositionally biased stretch (acidic residues) spans 232–242; that stretch reads PEEEAKDEEED. Positions 627–639 are enriched in basic and acidic residues; it reads EEARKLLPPSEKR. Basic residues predominate over residues 640–654; the sequence is TNRRNNRNKRNRQNR. Omega-N-methylarginine occurs at positions 656, 684, 738, and 747.

As to quaternary structure, binds to MLF1 and retains it in the nucleus.

It localises to the nucleus. The sequence is that of Heterogeneous nuclear ribonucleoprotein U-like protein 2 (HNRNPUL2) from Homo sapiens (Human).